A 310-amino-acid chain; its full sequence is tRNA dimethylallyltransferase (310 aa).

13–20 is a binding site for ATP; that stretch reads GPTASGKT. 15 to 20 is a substrate binding site; that stretch reads TASGKT. Interaction with substrate tRNA regions lie at residues 38-41, 162-166, 243-248, and 276-283; these read DSAL, QRLSR, RCVGYR, and KRQITWLR.

Belongs to the IPP transferase family. Monomer. Mg(2+) serves as cofactor.

The catalysed reaction is adenosine(37) in tRNA + dimethylallyl diphosphate = N(6)-dimethylallyladenosine(37) in tRNA + diphosphate. Catalyzes the transfer of a dimethylallyl group onto the adenine at position 37 in tRNAs that read codons beginning with uridine, leading to the formation of N6-(dimethylallyl)adenosine (i(6)A). In Aliivibrio fischeri (strain ATCC 700601 / ES114) (Vibrio fischeri), this protein is tRNA dimethylallyltransferase.